The following is a 622-amino-acid chain: Phosphoribomutase (622 aa).

Residues Thr57, Arg61, 158–159 (SH), and Lys168 contribute to the substrate site. Ser158 functions as the Phosphoserine intermediate in the catalytic mechanism. Ser158 lines the Mg(2+) pocket. Ser158 is modified (phosphoserine). The Mg(2+) site is built by Asp325, Asp327, and Asp329. Residues 329-330 (DR), Thr404, 428-430 (EEA), and Lys442 contribute to the substrate site.

This sequence belongs to the phosphohexose mutase family. Mg(2+) is required as a cofactor.

It is found in the cytoplasm. The protein localises to the nucleus. It catalyses the reaction alpha-D-ribose 1-phosphate = D-ribose 5-phosphate. Major phosphoribomutase that converts ribose 1-phosphate to ribose 5-phosphate. Involved in ribose salvage via the pentose phosphate pathway. This is Phosphoribomutase from Saccharomyces cerevisiae (strain ATCC 204508 / S288c) (Baker's yeast).